The following is a 282-amino-acid chain: 2-dehydro-3-deoxyphosphooctonate aldolase (282 aa).

It belongs to the KdsA family.

It is found in the cytoplasm. The enzyme catalyses D-arabinose 5-phosphate + phosphoenolpyruvate + H2O = 3-deoxy-alpha-D-manno-2-octulosonate-8-phosphate + phosphate. The protein operates within carbohydrate biosynthesis; 3-deoxy-D-manno-octulosonate biosynthesis; 3-deoxy-D-manno-octulosonate from D-ribulose 5-phosphate: step 2/3. It participates in bacterial outer membrane biogenesis; lipopolysaccharide biosynthesis. This is 2-dehydro-3-deoxyphosphooctonate aldolase from Granulibacter bethesdensis (strain ATCC BAA-1260 / CGDNIH1).